The following is a 669-amino-acid chain: DNA ligase (669 aa).

Residues 33–37, 82–83, and E115 contribute to the NAD(+) site; these read DVTYD and SL. Catalysis depends on K117, which acts as the N6-AMP-lysine intermediate. The NAD(+) site is built by R138, E172, K286, and K310. Zn(2+) is bound by residues C401, C404, C417, and C422. Residues 589-669 enclose the BRCT domain; it reads VDSSFLFGKK…DIKNLVNLDD (81 aa).

It belongs to the NAD-dependent DNA ligase family. LigA subfamily. Mg(2+) serves as cofactor. Mn(2+) is required as a cofactor.

The catalysed reaction is NAD(+) + (deoxyribonucleotide)n-3'-hydroxyl + 5'-phospho-(deoxyribonucleotide)m = (deoxyribonucleotide)n+m + AMP + beta-nicotinamide D-nucleotide.. Its function is as follows. DNA ligase that catalyzes the formation of phosphodiester linkages between 5'-phosphoryl and 3'-hydroxyl groups in double-stranded DNA using NAD as a coenzyme and as the energy source for the reaction. It is essential for DNA replication and repair of damaged DNA. The polypeptide is DNA ligase (Borrelia duttonii (strain Ly)).